Consider the following 335-residue polypeptide: Dihydroorotate dehydrogenase (quinone) (335 aa).

Residues 59–63 (AGLDK) and T83 contribute to the FMN site. K63 provides a ligand contact to substrate. 108–112 (NRMGF) provides a ligand contact to substrate. The FMN site is built by N136 and N169. N169 contacts substrate. Residue S172 is the Nucleophile of the active site. N174 is a substrate binding site. FMN contacts are provided by K214 and T242. 243–244 (NT) serves as a coordination point for substrate. Residues G265, G294, and 315–316 (YS) contribute to the FMN site.

It belongs to the dihydroorotate dehydrogenase family. Type 2 subfamily. In terms of assembly, monomer. It depends on FMN as a cofactor.

The protein localises to the cell membrane. The enzyme catalyses (S)-dihydroorotate + a quinone = orotate + a quinol. It participates in pyrimidine metabolism; UMP biosynthesis via de novo pathway; orotate from (S)-dihydroorotate (quinone route): step 1/1. Functionally, catalyzes the conversion of dihydroorotate to orotate with quinone as electron acceptor. The chain is Dihydroorotate dehydrogenase (quinone) from Neisseria meningitidis serogroup C / serotype 2a (strain ATCC 700532 / DSM 15464 / FAM18).